A 198-amino-acid chain; its full sequence is Ribonuclease HII (198 aa).

In terms of domain architecture, RNase H type-2 spans 3-198; sequence LSVGGIDEAG…SWETVGKLFK (196 aa). A divalent metal cation is bound by residues D9, E10, and D104.

The protein belongs to the RNase HII family. Requires Mn(2+) as cofactor. Mg(2+) serves as cofactor.

The protein resides in the cytoplasm. The catalysed reaction is Endonucleolytic cleavage to 5'-phosphomonoester.. Its function is as follows. Endonuclease that specifically degrades the RNA of RNA-DNA hybrids. The polypeptide is Ribonuclease HII (Pyrobaculum arsenaticum (strain DSM 13514 / JCM 11321 / PZ6)).